Reading from the N-terminus, the 201-residue chain is ADP-ribosylation factor-like protein 4D (201 aa).

A lipid anchor (N-myristoyl glycine) is attached at G2. Residues 28-35, 76-80, and 135-138 each bind GTP; these read GLDSAGKT, DVGGQ, and NKQD.

This sequence belongs to the small GTPase superfamily. Arf family. Interacts with CYTH2; the interaction is direct and ARL4D GTP-dependent. Does not interact with ARL4D.

Its subcellular location is the nucleus. The protein resides in the nucleolus. It is found in the cell membrane. The protein localises to the cytoplasm. Small GTP-binding protein which cycles between an inactive GDP-bound and an active GTP-bound form, and the rate of cycling is regulated by guanine nucleotide exchange factors (GEF) and GTPase-activating proteins (GAP). GTP-binding protein that does not act as an allosteric activator of the cholera toxin catalytic subunit. Recruits CYTH1, CYTH2, CYTH3 and CYTH4 to the plasma membrane in GDP-bound form. This chain is ADP-ribosylation factor-like protein 4D (Arl4d), found in Mus musculus (Mouse).